The sequence spans 212 residues: Uridine kinase (212 aa).

13–20 (GASASGKS) is a binding site for ATP.

The protein belongs to the uridine kinase family.

Its subcellular location is the cytoplasm. The catalysed reaction is uridine + ATP = UMP + ADP + H(+). It carries out the reaction cytidine + ATP = CMP + ADP + H(+). The protein operates within pyrimidine metabolism; CTP biosynthesis via salvage pathway; CTP from cytidine: step 1/3. It functions in the pathway pyrimidine metabolism; UMP biosynthesis via salvage pathway; UMP from uridine: step 1/1. In Psychromonas ingrahamii (strain DSM 17664 / CCUG 51855 / 37), this protein is Uridine kinase.